We begin with the raw amino-acid sequence, 486 residues long: MLTAIDYLTKKGWKISSDPRTYDGYPKNYGYRNYHENGINYDEFCGGYHRAFDVYSNETNDVPAVTSGTVIEANDYGNFGGTFVIRDANDNDWIYGHLQRGSMRFVVGDKVNQGDIIGLQGNSNYYDNPMSVHLHLQLRPKDAKKDEKSQVCSGLAMEKYDITNLNAKQDKSKNGSVKELKHIYSNHIKGNKITAPKPSIQGVVIHNDYGSMTPSQYLPWLYARENNGTHVNGWASVYANRNEVLWYHPTDYVEWHCGNQWANANLIGFEVCESYPGRISDKLFLENEEATLKVAADVMKSYGLPVNRNTVRLHNEFFGTSCPHRSWDLHVGKGEPYTTTNINKMKDYFIKRIKHYYDGGKLEVSKAATIKQSDVKQEVKKQEAKQIVKATDWKQNKDGIWYKAEHASFTVTAPEGIITRYKGPWTGHPQAGVLQKGQTIKYDEVQKFDGHVWVSWETFEGETVYMPVRTWDAKTGKVGKLWGEIK.

Cys45 and Cys152 form a disulfide bridge. His49 and Asp53 together coordinate Zn(2+). Repeat copies occupy residues 67 to 79 (SGTV…YGNF), 80 to 92 (GGTF…NDND), 96 to 108 (GHLQ…FVVG), 109 to 122 (DKVN…LQGN), 123 to 135 (SNYY…VHLH), 136 to 148 (LQLR…KDEK), 149 to 161 (SQVC…EKYD), 162 to 174 (ITNL…KSKN), 175 to 187 (GSVK…YSNH), 188 to 200 (IKGN…KPSI), 201 to 208 (QGVVIHND), 209 to 221 (YGSM…LPWL), and 222 to 234 (YARE…VNGW). Positions 67-247 (SGTVIEANDY…YANRNEVLWY (181 aa)) are 14 X 13 AA tandem repeats of A-E-V-E-T-S-K-[AP]-P-V-E-N-T. His135 serves as a coordination point for Zn(2+). In terms of domain architecture, N-acetylmuramoyl-L-alanine amidase spans 199-324 (SIQGVVIHND…NEFFGTSCPH (126 aa)). His206 serves as a coordination point for Zn(2+). The 14; approximate repeat unit spans residues 235 to 247 (ASVYANRNEVLWY). His314 and Cys322 together coordinate Zn(2+). The 69-residue stretch at 406–474 (HASFTVTAPE…YMPVRTWDAK (69 aa)) folds into the SH3b domain.

This sequence belongs to the N-acetylmuramoyl-L-alanine amidase 2 family. Zn(2+) serves as cofactor.

It catalyses the reaction Hydrolyzes the link between N-acetylmuramoyl residues and L-amino acid residues in certain cell-wall glycopeptides.. Endolysin that degrades host peptidoglycans and participates in the sequential events which lead to the programmed host cell lysis releasing the mature viral particles. The N-acetyl-muramidase activity cleaves between N-acetylmuramic acid and N-acetylglucosamine bonds. This chain is Endolysin 2638A, found in Staphylococcus aureus.